The following is a 317-amino-acid chain: tRNA pseudouridine synthase B (317 aa).

The active-site Nucleophile is the Asp47.

Belongs to the pseudouridine synthase TruB family. Type 1 subfamily.

The enzyme catalyses uridine(55) in tRNA = pseudouridine(55) in tRNA. Functionally, responsible for synthesis of pseudouridine from uracil-55 in the psi GC loop of transfer RNAs. The polypeptide is tRNA pseudouridine synthase B (Shewanella woodyi (strain ATCC 51908 / MS32)).